We begin with the raw amino-acid sequence, 208 residues long: Thymidylate kinase (208 aa).

Residue 7 to 14 (GIDGAGKT) coordinates ATP.

Belongs to the thymidylate kinase family.

It catalyses the reaction dTMP + ATP = dTDP + ADP. In terms of biological role, phosphorylation of dTMP to form dTDP in both de novo and salvage pathways of dTTP synthesis. The chain is Thymidylate kinase (tmk) from Xylella fastidiosa (strain 9a5c).